The sequence spans 233 residues: ATP synthase subunit C lysine N-methyltransferase (233 aa).

Methionine 1 carries the N-acetylmethionine modification. Residues 38–58 (FLLTGLVGGTLVAVYAVATPF) traverse the membrane as a helical segment. Residues 56–90 (TPFVTPALRKVCLPFVPATTKQIENVVKMLRCRRG) form a required for mitochondrial location region.

The protein belongs to the ANT/ATPSC lysine N-methyltransferase family. As to expression, ubiquitously expressed.

The protein localises to the mitochondrion membrane. The catalysed reaction is L-lysyl-[protein] + 3 S-adenosyl-L-methionine = N(6),N(6),N(6)-trimethyl-L-lysyl-[protein] + 3 S-adenosyl-L-homocysteine + 3 H(+). Functionally, mitochondrial protein-lysine N-methyltransferase that trimethylates ATP synthase subunit C, ATP5MC1 and ATP5MC2. Trimethylation is required for proper incorporation of the C subunit into the ATP synthase complex and mitochondrial respiration. Promotes chronic pain. Involved in persistent inflammatory and neuropathic pain: methyltransferase activity in the mitochondria of sensory neurons promotes chronic pain via a pathway that depends on the production of reactive oxygen species (ROS) and on the engagement of spinal cord microglia. The polypeptide is ATP synthase subunit C lysine N-methyltransferase (Homo sapiens (Human)).